The sequence spans 502 residues: Glycerol kinase (502 aa).

Threonine 14 is an ADP binding site. 3 residues coordinate ATP: threonine 14, threonine 15, and serine 16. Threonine 14 is a binding site for sn-glycerol 3-phosphate. Arginine 18 serves as a coordination point for ADP. The sn-glycerol 3-phosphate site is built by arginine 84, glutamate 85, and tyrosine 136. The glycerol site is built by arginine 84, glutamate 85, and tyrosine 136. Residue histidine 232 is modified to Phosphohistidine; by HPr. Aspartate 246 contacts sn-glycerol 3-phosphate. Positions 246 and 247 each coordinate glycerol. ADP contacts are provided by threonine 268 and glycine 311. The ATP site is built by threonine 268, glycine 311, glutamine 315, and glycine 412. Glycine 412 and asparagine 416 together coordinate ADP.

This sequence belongs to the FGGY kinase family. As to quaternary structure, homotetramer and homodimer (in equilibrium). The phosphoenolpyruvate-dependent sugar phosphotransferase system (PTS), including enzyme I, and histidine-containing protein (HPr) are required for the phosphorylation, which leads to the activation of the enzyme.

It carries out the reaction glycerol + ATP = sn-glycerol 3-phosphate + ADP + H(+). It participates in polyol metabolism; glycerol degradation via glycerol kinase pathway; sn-glycerol 3-phosphate from glycerol: step 1/1. Activated by phosphorylation and inhibited by fructose 1,6-bisphosphate (FBP). Key enzyme in the regulation of glycerol uptake and metabolism. Catalyzes the phosphorylation of glycerol to yield sn-glycerol 3-phosphate. The sequence is that of Glycerol kinase from Streptococcus pneumoniae (strain P1031).